A 1016-amino-acid chain; its full sequence is DNA polymerase I (1016 aa).

The 5'-3' exonuclease domain maps to 1-308; it reads MPNSIWTSSD…MEFTTLTRRV (308 aa). Residues 334–361 form a disordered region; that stretch reads GPDLDAAEPEPVAGGIPEVSGESVPMPP. In terms of domain architecture, 3'-5' exonuclease spans 394 to 630; that stretch reads SAYVTIRDLV…MEARGITVDR (237 aa). The interval 768 to 1016 is polymerase; sequence GRKIRTAFIS…RAATNWDEAH (249 aa).

The protein belongs to the DNA polymerase type-A family. Single-chain monomer with multiple functions.

The catalysed reaction is DNA(n) + a 2'-deoxyribonucleoside 5'-triphosphate = DNA(n+1) + diphosphate. Its function is as follows. In addition to polymerase activity, this DNA polymerase exhibits 3'-5' and 5'-3' exonuclease activity. The polypeptide is DNA polymerase I (polA) (Rhizobium leguminosarum).